The primary structure comprises 129 residues: Small ribosomal subunit protein uS11 (129 aa).

It belongs to the universal ribosomal protein uS11 family. Part of the 30S ribosomal subunit. Interacts with proteins S7 and S18. Binds to IF-3.

Located on the platform of the 30S subunit, it bridges several disparate RNA helices of the 16S rRNA. Forms part of the Shine-Dalgarno cleft in the 70S ribosome. This chain is Small ribosomal subunit protein uS11, found in Aeromonas hydrophila subsp. hydrophila (strain ATCC 7966 / DSM 30187 / BCRC 13018 / CCUG 14551 / JCM 1027 / KCTC 2358 / NCIMB 9240 / NCTC 8049).